The following is a 74-amino-acid chain: MLEGAKLIGAGAATIALAGAAVGIGNVFSSLIHSVARNPSLAKQLFGYAILGFALTEAIALFALMMAFLILFVF.

The next 2 membrane-spanning stretches (helical) occupy residues 8-28 (IGAGAATIALAGAAVGIGNVF) and 50-70 (ILGFALTEAIALFALMMAFLI).

This sequence belongs to the ATPase C chain family. F-type ATPases have 2 components, CF(1) - the catalytic core - and CF(0) - the membrane proton channel. CF(1) has five subunits: alpha(3), beta(3), gamma(1), delta(1), epsilon(1). CF(0) has three main subunits: a, b and c.

It localises to the mitochondrion membrane. In terms of biological role, this protein is one of the chains of the nonenzymatic membrane component (F0) of mitochondrial ATPase. This Triticum aestivum (Wheat) protein is ATP synthase subunit 9, mitochondrial (ATP9).